We begin with the raw amino-acid sequence, 364 residues long: Caffeic acid 3-O-methyltransferase 2 (364 aa).

129–135 (MNQDKVL) contributes to the substrate binding site. The segment at 161-179 (AFEYHGTDPRFNKVFNKGM) is substrate binding. S-adenosyl-L-methionine contacts are provided by glycine 207, aspartate 230, aspartate 250, methionine 251, and lysine 264. The active-site Proton acceptor is histidine 268.

This sequence belongs to the class I-like SAM-binding methyltransferase superfamily. Cation-independent O-methyltransferase family. COMT subfamily. As to quaternary structure, homodimer.

It catalyses the reaction (E)-caffeate + S-adenosyl-L-methionine = (E)-ferulate + S-adenosyl-L-homocysteine + H(+). Its pathway is aromatic compound metabolism; phenylpropanoid biosynthesis. Its function is as follows. Catalyzes the conversion of caffeic acid to ferulic acid and of 5-hydroxyferulic acid to sinapic acid. The resulting products may subsequently be converted to the corresponding alcohols that are incorporated into lignins. The sequence is that of Caffeic acid 3-O-methyltransferase 2 (OMT2) from Populus tremuloides (Quaking aspen).